The sequence spans 84 residues: Small ribosomal subunit protein bS20 (84 aa).

It belongs to the bacterial ribosomal protein bS20 family.

In terms of biological role, binds directly to 16S ribosomal RNA. The protein is Small ribosomal subunit protein bS20 of Porphyromonas gingivalis (strain ATCC 33277 / DSM 20709 / CIP 103683 / JCM 12257 / NCTC 11834 / 2561).